We begin with the raw amino-acid sequence, 303 residues long: MEDYVKIEKIGEGTYGVVYKGRHKSTGQVVAMKKIRLESEEEGVPSTAVREVSLLQELKHPNVVRLLDVLMQESRLYLIFEFLSMDLKKYLDSIPSGQYMDPMLVKSYLYQILEGIYFCHRRRVLHRDLKPQNLLIDNKGVIKLADFGLARAFGVPVRVYTHEVVTLWYRAPEVLLGSPRYSTPVDVWSTGTIFAELATKKPLFHGDSEIDQLFRIFRTLGTPNNDVWPDVESLPDYKNTFPKWKEGSLSSMVKNLDKNGLDLLAKMLIYNPPKRISAREAMTHPYFDDLDKSTLPAACINGV.

A Protein kinase domain is found at 4–287 (YVKIEKIGEG…AREAMTHPYF (284 aa)). ATP contacts are provided by residues 10–18 (IGEGTYGVV) and Lys33. The residue at position 14 (Thr14) is a Phosphothreonine. Position 15 is a phosphotyrosine; by wee1 and wee2 (Tyr15). The active-site Proton acceptor is the Asp128. Thr161 carries the post-translational modification Phosphothreonine; by cak.

Belongs to the protein kinase superfamily. CMGC Ser/Thr protein kinase family. CDC2/CDKX subfamily. As to quaternary structure, forms a stable but non-covalent complex with cyclin B in mature oocytes. In terms of processing, phosphorylation at Tyr-15 by wee1 and wee2 inhibits the protein kinase activity and acts negative regulator of entry into mitosis (G2 to M transition).

It is found in the nucleus. It localises to the cytoplasm. The protein localises to the cytoskeleton. The protein resides in the microtubule organizing center. Its subcellular location is the centrosome. It catalyses the reaction L-seryl-[protein] + ATP = O-phospho-L-seryl-[protein] + ADP + H(+). The enzyme catalyses L-threonyl-[protein] + ATP = O-phospho-L-threonyl-[protein] + ADP + H(+). The catalysed reaction is [DNA-directed RNA polymerase] + ATP = phospho-[DNA-directed RNA polymerase] + ADP + H(+). With respect to regulation, phosphorylation at Thr-14 or Tyr-15 inactivates the enzyme, while phosphorylation at Thr-161 activates it. Its function is as follows. Plays a key role in the control of the eukaryotic cell cycle by modulating the centrosome cycle as well as mitotic onset; promotes G2-M transition via association with multiple interphase cyclins. During G2 and early mitosis, CDC25A/B/C-mediated dephosphorylation activates CDK1/cyclin complexes which phosphorylate several substrates that trigger at least centrosome separation, Golgi dynamics, nuclear envelope breakdown and chromosome condensation. Once chromosomes are condensed and aligned at the metaphase plate, CDK1 activity is switched off by WEE1- and PKMYT1-mediated phosphorylation to allow sister chromatid separation, chromosome decondensation, reformation of the nuclear envelope and cytokinesis. Catalyzes lamin (LMNA, LMNB1 and LMNB2) phosphorylation at the onset of mitosis, promoting nuclear envelope breakdown. This chain is Cyclin-dependent kinase 1 (cdk1), found in Oryzias latipes (Japanese rice fish).